The following is a 92-amino-acid chain: Small ribosomal subunit protein uS19 (92 aa).

This sequence belongs to the universal ribosomal protein uS19 family.

Functionally, protein S19 forms a complex with S13 that binds strongly to the 16S ribosomal RNA. The sequence is that of Small ribosomal subunit protein uS19 from Gloeobacter violaceus (strain ATCC 29082 / PCC 7421).